Here is a 393-residue protein sequence, read N- to C-terminus: Pigment production hydroxylase (393 aa).

Functionally, involved in pigment production acting as a hydroxylase that transforms indole to indoxyl, resulting in the formation of indigo. The sequence is that of Pigment production hydroxylase from Rhodococcus erythropolis (Arthrobacter picolinophilus).